The following is a 165-amino-acid chain: Crossover junction endodeoxyribonuclease RuvC (165 aa).

Residues Asp-7, Glu-68, and His-142 contribute to the active site. Asp-7, Glu-68, and His-142 together coordinate Mg(2+).

The protein belongs to the RuvC family. In terms of assembly, homodimer which binds Holliday junction (HJ) DNA. The HJ becomes 2-fold symmetrical on binding to RuvC with unstacked arms; it has a different conformation from HJ DNA in complex with RuvA. In the full resolvosome a probable DNA-RuvA(4)-RuvB(12)-RuvC(2) complex forms which resolves the HJ. The cofactor is Mg(2+).

The protein localises to the cytoplasm. It carries out the reaction Endonucleolytic cleavage at a junction such as a reciprocal single-stranded crossover between two homologous DNA duplexes (Holliday junction).. Its function is as follows. The RuvA-RuvB-RuvC complex processes Holliday junction (HJ) DNA during genetic recombination and DNA repair. Endonuclease that resolves HJ intermediates. Cleaves cruciform DNA by making single-stranded nicks across the HJ at symmetrical positions within the homologous arms, yielding a 5'-phosphate and a 3'-hydroxyl group; requires a central core of homology in the junction. The consensus cleavage sequence is 5'-(A/T)TT(C/G)-3'. Cleavage occurs on the 3'-side of the TT dinucleotide at the point of strand exchange. HJ branch migration catalyzed by RuvA-RuvB allows RuvC to scan DNA until it finds its consensus sequence, where it cleaves and resolves the cruciform DNA. The chain is Crossover junction endodeoxyribonuclease RuvC from Anaplasma marginale (strain Florida).